A 496-amino-acid polypeptide reads, in one-letter code: Glycerol kinase (496 aa).

T12 is an ADP binding site. T12, T13, and S14 together coordinate ATP. Residue T12 coordinates sn-glycerol 3-phosphate. R16 provides a ligand contact to ADP. Sn-glycerol 3-phosphate is bound by residues R82, E83, and Y134. Glycerol is bound by residues R82, E83, and Y134. At H230 the chain carries Phosphohistidine; by HPr. D244 lines the sn-glycerol 3-phosphate pocket. Glycerol is bound by residues D244 and Q245. ADP-binding residues include T266 and G309. T266, G309, Q313, and G410 together coordinate ATP. ADP-binding residues include G410 and N414.

This sequence belongs to the FGGY kinase family. As to quaternary structure, homotetramer and homodimer (in equilibrium). The phosphoenolpyruvate-dependent sugar phosphotransferase system (PTS), including enzyme I, and histidine-containing protein (HPr) are required for the phosphorylation, which leads to the activation of the enzyme.

It carries out the reaction glycerol + ATP = sn-glycerol 3-phosphate + ADP + H(+). It participates in polyol metabolism; glycerol degradation via glycerol kinase pathway; sn-glycerol 3-phosphate from glycerol: step 1/1. Its activity is regulated as follows. Activated by phosphorylation and inhibited by fructose 1,6-bisphosphate (FBP). Key enzyme in the regulation of glycerol uptake and metabolism. Catalyzes the phosphorylation of glycerol to yield sn-glycerol 3-phosphate. The protein is Glycerol kinase of Bacillus anthracis (strain A0248).